We begin with the raw amino-acid sequence, 282 residues long: Small ribosomal subunit protein uS2 (282 aa).

Positions 245-266 (AEEAVEELPLPTGEAQDEASSK) are disordered.

Belongs to the universal ribosomal protein uS2 family.

The sequence is that of Small ribosomal subunit protein uS2 (rpsB) from Chlamydia trachomatis serovar D (strain ATCC VR-885 / DSM 19411 / UW-3/Cx).